The sequence spans 194 residues: Endoribonuclease ToxN (194 aa).

Residues 114 to 182 (MLKQYLFLKE…DQAKERDKAR (69 aa)) are a coiled coil. Over residues 171-182 (ERDQAKERDKAR) the composition is skewed to basic and acidic residues. Positions 171–194 (ERDQAKERDKARRIAYMRQMGRER) are disordered.

It belongs to the ToxN/AbiQ toxin family. In terms of assembly, one ToxN monomer binds to a 34-nt-long single repeat of the ToxI RNA; this complex forms a triangular heterohexameric complex with ToxN connected by the ToxI RNA to another toxin molecule. The ToxI repeats are cleavage products of their precursor. The ToxI repeat forms a pseudoknot which occludes the toxin active site.

Its function is as follows. Toxic component of a type III toxin-antitoxin (TA) system. An endoribonuclease which cleaves between the first and second A of AAAAA sequences; it tolerates other nucleotides in positions +2 and +4 of the consensus. Digests cognate antitoxin RNA ToxI as shown by the 2'-3'-cyclic phosphate at the 3' end of the 34-nt repeats and probably other RNAs. Inhibits growth when expressed in E.coli without causing cell lysis; this bacteriostatic effect is neutralized by cognate RNA antitoxin ToxI, which has 2.9 nearly identical 34 nucleotide-long repeats. Non-cognate antitoxin RNA from P.atrosepticum does not inhibit this toxin. The toxin-antitoxin pair function in plasmid maintenance (a plasmid addiction system), but unlike its P.atrosepticum homolog it is not seen to confer resistance to bacteriophages. In Bacillus thuringiensis subsp. kurstaki, this protein is Endoribonuclease ToxN.